Consider the following 663-residue polypeptide: DNA topoisomerase 4 subunit B (663 aa).

ATP-binding positions include Tyr7, Asn47, Asp74, Gly114 to Ala120, and Lys341. Residues Arg386 to Ala416 are disordered. A compositionally biased stretch (basic and acidic residues) spans Glu387 to Ser398. The 115-residue stretch at Asn424–Pro538 folds into the Toprim domain. 3 residues coordinate Mg(2+): Glu430, Asp503, and Asp505.

Belongs to the type II topoisomerase family. ParE type 2 subfamily. As to quaternary structure, heterotetramer composed of ParC and ParE. Mg(2+) serves as cofactor. Requires Mn(2+) as cofactor. Ca(2+) is required as a cofactor.

It carries out the reaction ATP-dependent breakage, passage and rejoining of double-stranded DNA.. Functionally, topoisomerase IV is essential for chromosome segregation. It relaxes supercoiled DNA. Performs the decatenation events required during the replication of a circular DNA molecule. In Staphylococcus aureus (strain Mu50 / ATCC 700699), this protein is DNA topoisomerase 4 subunit B.